The sequence spans 473 residues: Cannabinoid receptor 1 (473 aa).

Residues 1-117 (MKSILDGLAD…CFMILNPSQQ (117 aa)) lie on the Extracellular side of the membrane. Positions 2-23 (KSILDGLADTTFRTITTDLLYV) are required for mitochondrial localization. Asn-78 and Asn-84 each carry an N-linked (GlcNAc...) asparagine glycan. A helical membrane pass occupies residues 118-143 (LAIAVLSLTLGTFTVLENLLVLCVIL). Over 144–155 (HSRSLRCRPSYH) the chain is Cytoplasmic. The helical transmembrane segment at 156–176 (FIGSLAVADLLGSVIFVYSFV) threads the bilayer. The Extracellular segment spans residues 177-188 (DFHVFHRKDSPN). Residues 189–213 (VFLFKLGGVTASFTASVGSLFLTAI) form a helical membrane-spanning segment. Over 214–233 (DRYISIHRPLAYKRIVTRPK) the chain is Cytoplasmic. A helical membrane pass occupies residues 234-256 (AVVAFCLMWTIAIVIAVLPLLGW). The Extracellular portion of the chain corresponds to 257-274 (NCKKLQSVCSDIFPLIDE). A helical membrane pass occupies residues 275–300 (TYLMFWIGVTSVLLLFIVYAYMYILW). The Cytoplasmic portion of the chain corresponds to 301–345 (KAHSHAVRMIQRGTQKSIIIHTSEDGKVQVTRPDQARMDIRLAKT). Residues 346–366 (LVLILVVLIICWGPLLAIMVY) traverse the membrane as a helical segment. The Extracellular segment spans residues 367-378 (DVFGKMNKLIKT). A helical transmembrane segment spans residues 379-400 (VFAFCSMLCLLNSTVNPIIYAL). The Cytoplasmic portion of the chain corresponds to 401 to 473 (RSKDLRHAFR…VSTDTSAEAL (73 aa)). A lipid anchor (S-palmitoyl cysteine) is attached at Cys-416. Residues Ser-426 and Ser-430 each carry the phosphoserine modification.

The protein belongs to the G-protein coupled receptor 1 family. Interacts (via C-terminus) with CNRIP1. Associates with G protein alpha subunits, including G(i) alpha-1/GNAI1, G(i) alpha-3/GNAI3 and G(o)-alpha/GNAO1; palmitoylation is important for interaction with GNAI3 and GNAO1. In terms of processing, palmitoylation at Cys-416 is important for recruitment at both plasma membrane and lipid rafts and association with G protein alpha subunits. Expressed in the brain, in the striatum, medial septum, descending arm of the band of Broca, the amygdaloid nucleus, the hippocampus and cortex (at protein level). High levels in the lateral striatum. In rostral brain regions, high expression levels in the dorsal lateral striatum, while in the caudal brain regions, high levels are observed in the ventral lateral striatum. Expressed in monocytes/macrophages (at protein level). Expressed in striated muscles and in vascular smooth muscles cells (at protein level).

It is found in the cell membrane. Its subcellular location is the mitochondrion outer membrane. The protein resides in the cell projection. The protein localises to the axon. It localises to the presynapse. With respect to regulation, hemopressin, a peptide derived from hemoglobin subunit alpha (HBA1 and/or HBA2), acts as an antagonist peptide: hemopressin-binding efficiently blocks cannabinoid receptor CNR1 and subsequent signaling. G-protein coupled receptor for cannabinoids, including endocannabinoids (eCBs), such as N-arachidonoylethanolamide (also called anandamide or AEA) and 2-arachidonoylglycerol (2-AG). Mediates many cannabinoid-induced effects, acting, among others, on food intake, memory loss, gastrointestinal motility, catalepsy, ambulatory activity, anxiety, chronic pain. Signaling typically involves reduction in cyclic AMP. In the hypothalamus, may have a dual effect on mitochondrial respiration depending upon the agonist dose and possibly upon the cell type. Increases respiration at low doses, while decreases respiration at high doses. At high doses, CNR1 signal transduction involves G-protein alpha-i protein activation and subsequent inhibition of mitochondrial soluble adenylate cyclase, decrease in cyclic AMP concentration, inhibition of protein kinase A (PKA)-dependent phosphorylation of specific subunits of the mitochondrial electron transport system, including NDUFS2. In the hypothalamus, inhibits leptin-induced reactive oxygen species (ROS) formation and mediates cannabinoid-induced increase in SREBF1 and FASN gene expression. In response to cannabinoids, drives the release of orexigenic beta-endorphin, but not that of melanocyte-stimulating hormone alpha/alpha-MSH, from hypothalamic POMC neurons, hence promoting food intake. In the hippocampus, regulates cellular respiration and energy production in response to cannabinoids. Involved in cannabinoid-dependent depolarization-induced suppression of inhibition (DSI), a process in which depolarization of CA1 postsynaptic pyramidal neurons mobilizes eCBs, which retrogradely activate presynaptic CB1 receptors, transiently decreasing GABAergic inhibitory neurotransmission. Also reduces excitatory synaptic transmission. In superior cervical ganglions and cerebral vascular smooth muscle cells, inhibits voltage-gated Ca(2+) channels in a constitutive, as well as agonist-dependent manner. Induces leptin production in adipocytes and reduces LRP2-mediated leptin clearance in the kidney, hence participating in hyperleptinemia. In adipose tissue, CNR1 signaling leads to increased expression of SREBF1, ACACA and FASN genes. In the liver, activation by endocannabinoids leads to increased de novo lipogenesis and reduced fatty acid catabolism, associated with increased expression of SREBF1/SREBP-1, GCK, ACACA, ACACB and FASN genes. May also affect de novo cholesterol synthesis and HDL-cholesteryl ether uptake. Peripherally modulates energy metabolism. In high carbohydrate diet-induced obesity, may decrease the expression of mitochondrial dihydrolipoyl dehydrogenase/DLD in striated muscles, as well as that of selected glucose/ pyruvate metabolic enzymes, hence affecting energy expenditure through mitochondrial metabolism. In response to cannabinoid anandamide, elicits a pro-inflammatory response in macrophages, which involves NLRP3 inflammasome activation and IL1B and IL18 secretion. In macrophages infiltrating pancreatic islets, this process may participate in the progression of type-2 diabetes and associated loss of pancreatic beta-cells. The chain is Cannabinoid receptor 1 (Cnr1) from Rattus norvegicus (Rat).